Here is a 212-residue protein sequence, read N- to C-terminus: Ras-related protein Rab-15 (212 aa).

Residues serine 17, glycine 18, valine 19, glycine 20, lysine 21, threonine 22, cysteine 23, serine 35, serine 39, and threonine 40 each contribute to the GTP site. Threonine 22 is a Mg(2+) binding site. 2 short sequence motifs (switch) span residues 31-45 (NEFHSSHISTIGVDF) and 63-80 (DTAGQERYQTITKQYYRR). Mg(2+)-binding residues include threonine 40 and aspartate 63. Positions 66, 121, 122, 124, 151, and 152 each coordinate GTP. S-geranylgeranyl cysteine attachment occurs at residues cysteine 210 and cysteine 212. The residue at position 212 (cysteine 212) is a Cysteine methyl ester.

This sequence belongs to the small GTPase superfamily. Rab family. The GTP bound form of RAB15 interacts with REP15. Interacts (GTP-bound form) with MICAL1, MICAL3, MICALCL, EHBP1 and EHBP1L1. It depends on Mg(2+) as a cofactor. In terms of tissue distribution, expressed predominantly in neural tissues.

The protein localises to the cell membrane. It carries out the reaction GTP + H2O = GDP + phosphate + H(+). Its activity is regulated as follows. Regulated by guanine nucleotide exchange factors (GEFs) which promote the exchange of bound GDP for free GTP. Regulated by GTPase activating proteins (GAPs) which increase the GTP hydrolysis activity. Inhibited by GDP dissociation inhibitors (GDIs). In terms of biological role, the small GTPases Rab are key regulators of intracellular membrane trafficking, from the formation of transport vesicles to their fusion with membranes. Rabs cycle between an inactive GDP-bound form and an active GTP-bound form that is able to recruit to membranes different sets of downstream effectors directly responsible for vesicle formation, movement, tethering and fusion. RAB15 may act in concert with RAB3A in regulating aspects of synaptic vesicle membrane flow within the nerve terminal. The sequence is that of Ras-related protein Rab-15 from Rattus norvegicus (Rat).